A 258-amino-acid polypeptide reads, in one-letter code: Ribosomal RNA small subunit methyltransferase J (258 aa).

Residues 111-112, 127-128, and D179 contribute to the S-adenosyl-L-methionine site; these read RD and ER.

It belongs to the methyltransferase superfamily. RsmJ family.

Its subcellular location is the cytoplasm. The enzyme catalyses guanosine(1516) in 16S rRNA + S-adenosyl-L-methionine = N(2)-methylguanosine(1516) in 16S rRNA + S-adenosyl-L-homocysteine + H(+). Functionally, specifically methylates the guanosine in position 1516 of 16S rRNA. In Alteromonas mediterranea (strain DSM 17117 / CIP 110805 / LMG 28347 / Deep ecotype), this protein is Ribosomal RNA small subunit methyltransferase J.